We begin with the raw amino-acid sequence, 758 residues long: Microtubule-associated protein tau (758 aa).

Positions 1–26 are enriched in basic and acidic residues; it reads MAEPRQEFEVMEDHAGTYGLGDRKDQ. The interval 1–573 is disordered; the sequence is MAEPRQEFEV…PVPMPDLKNV (573 aa). At A2 the chain carries N-acetylalanine. Y18 is subject to Phosphotyrosine; by FYN. Y29 is subject to Phosphotyrosine. K44 participates in a covalent cross-link: Glycyl lysine isopeptide (Lys-Gly) (interchain with G-Cter in ubiquitin). Residues S46 and S61 each carry the phosphoserine modification. Positions 61-71 are enriched in polar residues; the sequence is SETSDAKSTPT. Phosphothreonine is present on residues T69 and T71. An N-linked (Glc) (glycation) lysine; in PHF-tau; in vitro glycan is attached at K87. A Phosphothreonine modification is found at T111. Composition is skewed to basic and acidic residues over residues 179–189 and 207–216; these read EGGRHAPELLK and GGKERPGSKE. Position 214 is a phosphoserine; by SGK1 (S214). The segment covering 217 to 228 has biased composition (acidic residues); that stretch reads EVDEDRDVDESS. Residues 314 to 323 show a composition bias toward basic and acidic residues; the sequence is EQAHSEEHLG. The segment covering 324–340 has biased composition (low complexity); it reads RAAFPGAPGEGPEARGP. Composition is skewed to basic and acidic residues over residues 344-356 and 381-393; these read EDTK…EPSE and KSKD…DKKA. N-linked (Glc) (glycation) lysine; in PHF-tau; in vitro glycosylation occurs at K383. Residues 442-453 show a composition bias toward low complexity; it reads VSSVTSRTGSSG. A compositionally biased stretch (basic and acidic residues) spans 455–466; the sequence is KEMKLKGADGKT. N-linked (Glc) (glycation) lysine; in PHF-tau; in vitro glycosylation occurs at K467. T470 carries the post-translational modification Phosphothreonine; by PDPK1. The residue at position 472 (R472) is an Omega-N-methylarginine. An N-linked (Glc) (glycation) lysine; in PHF-tau; in vitro glycan is attached at K480. N6,N6-dimethyllysine; alternate is present on K480. Residue K480 is modified to N6-acetyllysine; alternate. A Deamidated asparagine; in tau and PHF-tau; partial modification is found at N484. T486 carries the phosphothreonine modification. Residue K491 is glycosylated (N-linked (Glc) (glycation) lysine; in PHF-tau; in vitro). A compositionally biased stretch (pro residues) spans 491 to 503; that stretch reads KTPPAPKTPPSSG. At T492 the chain carries Phosphothreonine. T498 carries the post-translational modification Phosphothreonine; by PDPK1. A phosphoserine mark is found at S502, S508, and S512. Low complexity predominate over residues 504–531; sequence EPPKSGDRSGYSSPGSPGTPGSRSRTPS. Y514 carries the phosphotyrosine; by TTBK1 modification. S515 and S516 each carry phosphoserine; by PDPK1 and TTBK1. S519 bears the Phosphoserine; by CK1, PDPK1 and TTBK1 mark. T522 carries the post-translational modification Phosphothreonine; by CK1 and PDPK1. O-linked (GlcNAc) serine glycosylation is present at S525. The residue at position 529 (T529) is a Phosphothreonine; by BRSK1, BRSK2, DYRK2 and PDPK1. At S531 the chain carries Phosphoserine; by PKA. The residue at position 534 (T534) is a Phosphothreonine; by PDPK1. The N-linked (Glc) (glycation) lysine; in PHF-tau; in vitro glycan is linked to K542. The residue at position 542 (K542) is an N6-acetyllysine. T548 is modified (phosphothreonine; by GSK3-beta and PDPK1). N-linked (Glc) (glycation) lysine; in PHF-tau; in vitro glycosylation is present at K551. S552 bears the Phosphoserine; by PDPK1 mark. Residue S554 is modified to Phosphoserine; by PHK. O-linked (GlcNAc) serine glycosylation occurs at S555. 4 Tau/MAP repeats span residues 561-591, 592-622, 623-653, and 654-685; these read QTAP…GGGK, VQII…GGGS, VQIV…GGGQ, and VEVK…GGGN. The microtubule-binding domain stretch occupies residues 561 to 685; that stretch reads QTAPVPMPDL…NITHVPGGGN (125 aa). A Glycyl lysine isopeptide (Lys-Gly) (interchain with G-Cter in ubiquitin); in PHF-tau cross-link involves residue K571. K576 is a glycosylation site (N-linked (Glc) (glycation) lysine; in PHF-tau; in vitro). The residue at position 576 (K576) is an N6-acetyllysine; alternate. N6-methyllysine; alternate is present on K576. A Glycyl lysine isopeptide (Lys-Gly) (interchain with G-Cter in ubiquitin); alternate cross-link involves residue K576. Residue S579 is modified to Phosphoserine; by MARK1, MARK2, MARK3, MARK4, BRSK1, BRSK2 and PHK. K584 is covalently cross-linked (Glycyl lysine isopeptide (Lys-Gly) (interchain with G-Cter in ubiquitin)). N596 is modified (deamidated asparagine; in tau and PHF-tau; partial). Residues K597 and K598 are each glycosylated (N-linked (Glc) (glycation) lysine; in PHF-tau; in vitro). At K598 the chain carries N6-acetyllysine; alternate. A Glycyl lysine isopeptide (Lys-Gly) (interchain with G-Cter in ubiquitin); alternate cross-link involves residue K598. S602 carries the phosphoserine; by PHK modification. K607 carries the N6-acetyllysine modification. The cysteines at positions 608 and 639 are disulfide-linked. Residue S610 is modified to Phosphoserine. At K615 the chain carries N6-acetyllysine; alternate. K615 is covalently cross-linked (Glycyl lysine isopeptide (Lys-Gly) (interchain with G-Cter in ubiquitin); alternate). Position 622 is a phosphoserine; by PHK (S622). An N6,N6-dimethyllysine; alternate modification is found at K628. 3 positions are modified to N6-acetyllysine; alternate: K628, K634, and K638. A Glycyl lysine isopeptide (Lys-Gly) (interchain with G-Cter in ubiquitin); in PHF-tau cross-link involves residue K628. Residues K634 and K638 each participate in a glycyl lysine isopeptide (Lys-Gly) (interchain with G-Cter in ubiquitin); alternate cross-link. S641 bears the Phosphoserine mark. 3 positions are modified to N6-acetyllysine; alternate: K648, K660, and K664. Residues K648, K660, and K664 each participate in a glycyl lysine isopeptide (Lys-Gly) (interchain with G-Cter in ubiquitin); alternate cross-link. Residue K664 is glycosylated (N-linked (Glc) (glycation) lysine; in PHF-tau; in vitro). R666 is subject to Omega-N-methylarginine. S669 bears the Phosphoserine; by PHK mark. K670 carries an N-linked (Glc) (glycation) lysine; in PHF-tau; in vitro glycan. K670 is covalently cross-linked (Glycyl lysine isopeptide (Lys-Gly) (interchain with G-Cter in ubiquitin); in PHF-tau). S673 carries the phosphoserine modification. K686 carries N-linked (Glc) (glycation) lysine; in PHF-tau; in vitro glycosylation. The residue at position 686 (K686) is an N6-acetyllysine; alternate. K686 is covalently cross-linked (Glycyl lysine isopeptide (Lys-Gly) (interchain with G-Cter in ubiquitin); alternate). K692 participates in a covalent cross-link: Glycyl lysine isopeptide (Lys-Gly) (interchain with G-Cter in ubiquitin). K702 carries the N6-acetyllysine; alternate modification. A Glycyl lysine isopeptide (Lys-Gly) (interchain with G-Cter in ubiquitin); alternate cross-link involves residue K702. Y711 carries the post-translational modification Phosphotyrosine. Residue S713 is modified to Phosphoserine; by CK1 and PDPK1. The tract at residues 715–734 is disordered; the sequence is VVSGDTSPRHLSNVSSTGSI. A Phosphoserine; alternate modification is found at S717. S717 carries an O-linked (GlcNAc) serine; alternate glycan. The span at 718–733 shows a compositional bias: polar residues; that stretch reads GDTSPRHLSNVSSTGS. T720 is subject to Phosphothreonine. S721 carries the post-translational modification Phosphoserine; by CK1 and PDPK1. At S726 the chain carries Phosphoserine. S733 is subject to Phosphoserine; by CaMK2 and TTBK1. At S739 the chain carries Phosphoserine; by PDPK1 and TTBK1. T744 carries the phosphothreonine; by TTBK1 modification.

In terms of assembly, interacts with MARK1, MARK2, MARK3 and MARK4. Interacts with PSMC2 through SQSTM1. Interacts with SQSTM1 when polyubiquitinated. Interacts with FKBP4. Binds to CSNK1D. Interacts with SGK1. Interacts with EPM2A; the interaction dephosphorylates MAPT at Ser-396. Interacts with PIN1. Interacts with LRRK2. Interacts with LRP1, leading to endocytosis; this interaction is reduced in the presence of LRPAP1/RAP. Post-translationally, phosphorylation at serine and threonine residues in S-P or T-P motifs by proline-directed protein kinases (PDPK1, CDK1, CDK5, GSK3, MAPK) (only 2-3 sites per protein in interphase, seven-fold increase in mitosis, and in the form associated with paired helical filaments (PHF-tau)), and at serine residues in K-X-G-S motifs by MAP/microtubule affinity-regulating kinase (MARK1, MARK2, MARK3 or MARK4), causing detachment from microtubules, and their disassembly. Phosphorylation decreases with age. Phosphorylation within tau/MAP's repeat domain or in flanking regions seems to reduce tau/MAP's interaction with, respectively, microtubules or plasma membrane components. Phosphorylation on Ser-610, Ser-622, Ser-641 and Ser-673 in several isoforms during mitosis. Phosphorylation at Ser-548 by GSK3B reduces ability to bind and stabilize microtubules. Phosphorylation at Ser-579 by BRSK1 and BRSK2 in neurons affects ability to bind microtubules and plays a role in neuron polarization. Phosphorylated at Ser-554, Ser-579, Ser-602, Ser-606 and Ser-669 by PHK. Phosphorylation at Ser-214 by SGK1 mediates microtubule depolymerization and neurite formation in hippocampal neurons. There is a reciprocal down-regulation of phosphorylation and O-GlcNAcylation. Phosphorylation on Ser-717 completely abolishes the O-GlcNAcylation on this site, while phosphorylation on Ser-713 and Ser-721 reduces glycosylation by a factor of 2 and 4 respectively. Phosphorylation on Ser-721 is reduced by about 41.5% by GlcNAcylation on Ser-717. Dephosphorylated at several serine and threonine residues by the serine/threonine phosphatase PPP5C. In terms of processing, polyubiquitinated. Requires functional TRAF6 and may provoke SQSTM1-dependent degradation by the proteasome. PHF-tau can be modified by three different forms of polyubiquitination. 'Lys-48'-linked polyubiquitination is the major form, 'Lys-6'-linked and 'Lys-11'-linked polyubiquitination also occur. O-glycosylated. O-GlcNAcylation content is around 8.2%. There is reciprocal down-regulation of phosphorylation and O-GlcNAcylation. Phosphorylation on Ser-717 completely abolishes the O-GlcNAcylation on this site, while phosphorylation on Ser-713 and Ser-721 reduces O-GlcNAcylation by a factor of 2 and 4 respectively. O-GlcNAcylation on Ser-717 decreases the phosphorylation on Ser-721 by about 41.5%. Post-translationally, glycation of PHF-tau, but not normal brain TAU/MAPT. Glycation is a non-enzymatic post-translational modification that involves a covalent linkage between a sugar and an amino group of a protein molecule forming ketoamine. Subsequent oxidation, fragmentation and/or cross-linking of ketoamine leads to the production of advanced glycation endproducts (AGES). Glycation may play a role in stabilizing PHF aggregation leading to tangle formation in AD. In terms of tissue distribution, expressed in neurons. Isoform PNS-tau is expressed in the peripheral nervous system while the others are expressed in the central nervous system.

The protein localises to the cytoplasm. It localises to the cytosol. It is found in the cell membrane. The protein resides in the cytoskeleton. Its subcellular location is the cell projection. The protein localises to the axon. It localises to the dendrite. It is found in the secreted. Its function is as follows. Promotes microtubule assembly and stability, and might be involved in the establishment and maintenance of neuronal polarity. The C-terminus binds axonal microtubules while the N-terminus binds neural plasma membrane components, suggesting that tau functions as a linker protein between both. Axonal polarity is predetermined by TAU/MAPT localization (in the neuronal cell) in the domain of the cell body defined by the centrosome. The short isoforms allow plasticity of the cytoskeleton whereas the longer isoforms may preferentially play a role in its stabilization. The protein is Microtubule-associated protein tau of Homo sapiens (Human).